We begin with the raw amino-acid sequence, 586 residues long: Asparagine synthetase [glutamine-hydrolyzing] (586 aa).

C2 serves as the catalytic For GATase activity. The Glutamine amidotransferase type-2 domain maps to C2 to G185. L-glutamine is bound by residues R50–I54, N75–E77, and D98. Residues P193–P516 enclose the Asparagine synthetase domain. ATP-binding positions include L231, I267, and S341 to G342.

The catalysed reaction is L-aspartate + L-glutamine + ATP + H2O = L-asparagine + L-glutamate + AMP + diphosphate + H(+). The protein operates within amino-acid biosynthesis; L-asparagine biosynthesis; L-asparagine from L-aspartate (L-Gln route): step 1/1. Its function is as follows. Essential for nitrogen assimilation, distribution and remobilization within the plant via the phloem. This is Asparagine synthetase [glutamine-hydrolyzing] (ASN1) from Zea mays (Maize).